A 975-amino-acid polypeptide reads, in one-letter code: Chromosome transmission fidelity protein 18 homolog (975 aa).

Disordered regions lie at residues 30-83 (EGAS…KRQV) and 114-141 (SEEMEEPPPPDSSPTDITPPPSPEDLAE). Phosphothreonine is present on T51. Over residues 58–77 (RGDAASSPAPAASVGSSQGG) the composition is skewed to low complexity. S64 carries the post-translational modification Phosphoserine. The segment covering 122-136 (PPDSSPTDITPPPSP) has biased composition (pro residues). At S225 the chain carries Phosphoserine. Disordered stretches follow at residues 246–276 (SDTLHSLRSGEEEAAQPLGAPEEEPTDGQDA) and 320–346 (RPSRKPRPSVEPARVSKEATAPGKWKS). 374–381 (GPPGLGKT) contributes to the ATP binding site. Positions 858–896 (ASARVENSPQVDGSPPGLEGLLGGIGEKGVHRPAPRNHE) are disordered. S871 is modified (phosphoserine).

It belongs to the activator 1 small subunits family. CTF18 subfamily. Component of the CTF18-RFC complex, which consists of CTF18, CTF8, DCC1, RFC2, RFC3, RFC4 and RFC5. During assembly of the CTF18-RFC complex, CTF18 may first assemble into a subcomplex with RFC2, RFC3, RFC4 and RFC5. CTF18 then interacts directly with CTF8, which in turn interacts with DCC1. The CTF18-RFC complex associates with PCNA and with DNA polymerase POLH. The CTF18-RFC complex does not interact with the Rad9/Rad1/Hus1 complex. CTF18 interacts with SMC1A and RAD21. Interacts with DDX11.

Its subcellular location is the nucleus. Chromosome cohesion factor involved in sister chromatid cohesion and fidelity of chromosome transmission. Component of one of the cell nuclear antigen loader complexes, CTF18-replication factor C (CTF18-RFC), which consists of CTF18, CTF8, DCC1, RFC2, RFC3, RFC4 and RFC5. The CTF18-RFC complex binds to single-stranded and primed DNAs and has weak ATPase activity that is stimulated by the presence of primed DNA, replication protein A (RPA) and by proliferating cell nuclear antigen (PCNA). The CTF18-RFC complex catalyzes the ATP-dependent loading of PCNA onto primed and gapped DNA. Interacts with and stimulates DNA polymerase POLH. During DNA repair synthesis, involved in loading DNA polymerase POLE at the sites of local damage. The protein is Chromosome transmission fidelity protein 18 homolog (CHTF18) of Homo sapiens (Human).